We begin with the raw amino-acid sequence, 585 residues long: Zinc finger protein 732 (585 aa).

The region spanning 4 to 75 (LTFRDVAIEF…KIHETVAKHP (72 aa)) is the KRAB domain. Residues 141–163 (FQCNVHVKVFSTFSNSNQRRIRH) form a C2H2-type 1; degenerate zinc finger. The C2H2-type 2; degenerate zinc finger occupies 167-189 (KHFKECGKSFQKFSDLTQHQGIH). The C2H2-type 3; degenerate zinc-finger motif lies at 195–217 (YTCEECGKDFKWYLIFNEYEIIH). A C2H2-type 4 zinc finger spans residues 223–244 (FTCEECGNIFTTSSNFAKHKVH). The C2H2-type 5; degenerate zinc-finger motif lies at 250–272 (YKYEECGKAFNRSSTLTKHKRIH). C2H2-type zinc fingers lie at residues 278–300 (FTCE…KKIH), 306–328 (YKCQ…NRIH), 334–356 (YTCE…KRIH), 362–384 (YKCE…KSIH), 390–412 (YTCE…KRIH), 418–440 (HKCE…KIIH), 446–468 (YKCE…KKIH), 474–496 (YRCE…KTIH), and 502–524 (YECE…KKIH). The segment at 530 to 552 (YRCEECGKAFRRSRVLNKYKTIH) adopts a C2H2-type 15; degenerate zinc-finger fold. A C2H2-type 16; degenerate zinc finger spans residues 558-580 (PKCKGCGKAFKWSSYLNQHNKIY).

It belongs to the krueppel C2H2-type zinc-finger protein family.

The protein localises to the nucleus. In terms of biological role, may be involved in transcriptional regulation. In Homo sapiens (Human), this protein is Zinc finger protein 732 (ZNF732).